A 178-amino-acid chain; its full sequence is UPF0302 protein BcerKBAB4_1445 (178 aa).

The protein belongs to the UPF0302 family.

The protein is UPF0302 protein BcerKBAB4_1445 of Bacillus mycoides (strain KBAB4) (Bacillus weihenstephanensis).